The primary structure comprises 1363 residues: ABC multidrug transporter MDR2 (1363 aa).

The chain crosses the membrane as a helical span at residues 65 to 85 (IALIVIGTIAGIGAGIPFPLL). Residues 69-367 (VIGTIAGIGA…MAPFMHIFAS (299 aa)) form the ABC transmembrane type-1 1 domain. Asparagine 97 carries an N-linked (GlcNAc...) asparagine glycan. Transmembrane regions (helical) follow at residues 119–139 (VLQV…HTGC), 193–213 (KVGL…VAFL), 215–235 (VATI…MAFG), 301–321 (IQFG…FWQG), and 336–356 (VSVG…FVLS). One can recognise an ABC transporter 1 domain in the interval 403–682 (IELQDVTFNY…DGVYAGMVRL (280 aa)). 438-445 (GTSGSGKS) contributes to the ATP binding site. N-linked (GlcNAc...) asparagine glycans are attached at residues asparagine 552 and asparagine 633. Positions 738–758 (YMPEEADSLPTEPENEKEKPK) are disordered. The next 3 membrane-spanning stretches (helical) occupy residues 781–801 (LGLI…VIFG), 820–840 (GMLF…AVIV), and 896–916 (LTGT…AGVI). Residues 781–1052 (LGLITSIMIG…MFALVPDISK (272 aa)) enclose the ABC transmembrane type-1 2 domain. Asparagine 973 is a glycosylation site (N-linked (GlcNAc...) asparagine). The next 2 membrane-spanning stretches (helical) occupy residues 992 to 1012 (FWLS…YWWG) and 1016 to 1036 (ILAG…LLFS). Positions 1119–1358 (VQFRNVHFRY…CESYRANVIH (240 aa)) constitute an ABC transporter 2 domain. 1154–1161 (GPSGSGKS) is a binding site for ATP.

Belongs to the ABC transporter superfamily. ABCB family. Multidrug resistance exporter (TC 3.A.1.201) subfamily.

It localises to the cell membrane. Its function is as follows. Pleiotropic ABC efflux transporter that may be involved in the modulation susceptibility to a wide range of unrelated cytotoxic compounds. The polypeptide is ABC multidrug transporter MDR2 (Trichophyton tonsurans (strain CBS 112818) (Scalp ringworm fungus)).